A 214-amino-acid chain; its full sequence is Rac-like GTP-binding protein 2 (214 aa).

GTP is bound at residue 14-21 (GDGAVGKT). The Effector region motif lies at 36 to 44 (YIPTVFDNF). Residues 61 to 65 (DTAGQ) and 119 to 122 (TKLD) contribute to the GTP site.

The protein belongs to the small GTPase superfamily. Rho family. Post-translationally, may be palmitoylated.

It localises to the cytoplasm. The protein resides in the membrane. In terms of biological role, inactive GDP-bound Rho GTPases reside in the cytosol, are found in a complex with Rho GDP-dissociation inhibitors (Rho GDIs), and are released from the GDI protein in order to translocate to membranes upon activation. This chain is Rac-like GTP-binding protein 2 (RAC2), found in Oryza sativa subsp. japonica (Rice).